The primary structure comprises 517 residues: Beta-glucosidase 1 (517 aa).

The first 22 residues, 1–22 (MEDVLTLITMIVLLLLAFHGFG), serve as a signal peptide directing secretion. A beta-D-glucoside is bound by residues glutamine 48, histidine 145, and 190 to 191 (NE). Glutamate 191 acts as the Proton donor in catalysis. An intrachain disulfide couples cysteine 210 to cysteine 217. N-linked (GlcNAc...) asparagine glycosylation is found at asparagine 216 and asparagine 221. A beta-D-glucoside contacts are provided by tyrosine 333 and glutamate 406. The active-site Nucleophile is the glutamate 406. N-linked (GlcNAc...) asparagine glycosylation occurs at asparagine 441. 2 residues coordinate a beta-D-glucoside: tryptophan 451 and phenylalanine 467. 2 N-linked (GlcNAc...) asparagine glycosylation sites follow: asparagine 473 and asparagine 512.

It belongs to the glycosyl hydrolase 1 family.

The catalysed reaction is Hydrolysis of terminal, non-reducing beta-D-glucosyl residues with release of beta-D-glucose.. The polypeptide is Beta-glucosidase 1 (Arabidopsis thaliana (Mouse-ear cress)).